Consider the following 238-residue polypeptide: Ribonuclease PH (238 aa).

Residues Arg86 and 124–126 contribute to the phosphate site; that span reads GTR.

It belongs to the RNase PH family. In terms of assembly, homohexameric ring arranged as a trimer of dimers.

The catalysed reaction is tRNA(n+1) + phosphate = tRNA(n) + a ribonucleoside 5'-diphosphate. Phosphorolytic 3'-5' exoribonuclease that plays an important role in tRNA 3'-end maturation. Removes nucleotide residues following the 3'-CCA terminus of tRNAs; can also add nucleotides to the ends of RNA molecules by using nucleoside diphosphates as substrates, but this may not be physiologically important. Probably plays a role in initiation of 16S rRNA degradation (leading to ribosome degradation) during starvation. The protein is Ribonuclease PH of Salmonella agona (strain SL483).